The chain runs to 168 residues: Peptide methionine sulfoxide reductase 2 (168 aa).

One can recognise a MsrB domain in the interval 40 to 168; sequence DVKWNDALTP…NSASLNLKKD (129 aa). The Zn(2+) site is built by Cys79, Cys82, Cys128, and Cys131. Cys97 and Cys157 are joined by a disulfide. The active-site Nucleophile is the Cys157.

Belongs to the MsrB Met sulfoxide reductase family. It depends on Zn(2+) as a cofactor.

The catalysed reaction is L-methionyl-[protein] + [thioredoxin]-disulfide + H2O = L-methionyl-(R)-S-oxide-[protein] + [thioredoxin]-dithiol. Functionally, methionine-R-sulfoxide reductase which catalyzes the reduction of methionine sulfoxide (MetSO) to methionine in proteins. Plays a protective role against oxidative stress by restoring activity to proteins that have been inactivated by methionine oxidation. Protects iron-sulfur clusters from oxidative inactivation along with MXR1. Involved in the regulation of lifespan. This Saccharomyces cerevisiae (strain ATCC 204508 / S288c) (Baker's yeast) protein is Peptide methionine sulfoxide reductase 2 (MXR2).